The following is a 396-amino-acid chain: F-box protein pof13 (396 aa).

Positions 40–89 (KNSNLFLLNRDIWSLIINYLDAFDILRLMHSSRQFYYWLRKSAVDECCFN) constitute an F-box domain.

As to quaternary structure, part of a SCF (SKP1-cullin-F-box) protein ligase complex. Interacts with skp1.

It is found in the cytoplasm. The protein operates within protein modification; protein ubiquitination. The polypeptide is F-box protein pof13 (pof13) (Schizosaccharomyces pombe (strain 972 / ATCC 24843) (Fission yeast)).